The sequence spans 258 residues: Small ribosomal subunit protein uS3 (258 aa).

Positions 16–85 constitute a KH type-2 domain; it reads IDEYLEKELE…NPQVEVKEVD (70 aa). Residues 198-258 form a disordered region; it reads RVTETPAEEA…KDADGEESEK (61 aa). Positions 203-245 are enriched in acidic residues; that stretch reads PAEEASEASEVVEDLEEVEDLEEIEDLEEVEDLEEVEDLEDTE.

It belongs to the universal ribosomal protein uS3 family. Part of the 30S ribosomal subunit.

Binds the lower part of the 30S subunit head. The sequence is that of Small ribosomal subunit protein uS3 from Methanothermobacter thermautotrophicus (strain ATCC 29096 / DSM 1053 / JCM 10044 / NBRC 100330 / Delta H) (Methanobacterium thermoautotrophicum).